The following is a 190-amino-acid chain: Small ribosomal subunit protein mS23 (190 aa).

N-acetylalanine is present on alanine 2. N6-acetyllysine is present on lysine 102. Residues 139 to 190 (RTQHGGSHVSRKSEHLSVRPQTALEENETQKEVPQDQHLEAPADQSKGLLPP) form a disordered region. The segment covering 166–179 (ETQKEVPQDQHLEA) has biased composition (basic and acidic residues).

The protein belongs to the mitochondrion-specific ribosomal protein mS23 family. Component of the mitochondrial small ribosomal subunit (mt-SSU). Mature mammalian 55S mitochondrial ribosomes consist of a small (28S) and a large (39S) subunit. The 28S small subunit contains a 12S ribosomal RNA (12S mt-rRNA) and 30 different proteins. The 39S large subunit contains a 16S rRNA (16S mt-rRNA), a copy of mitochondrial valine transfer RNA (mt-tRNA(Val)), which plays an integral structural role, and 52 different proteins.

Its subcellular location is the mitochondrion. In Homo sapiens (Human), this protein is Small ribosomal subunit protein mS23 (MRPS23).